Reading from the N-terminus, the 317-residue chain is Ribosomal protein L11 methyltransferase (317 aa).

Positions 158, 179, 201, and 244 each coordinate S-adenosyl-L-methionine.

This sequence belongs to the methyltransferase superfamily. PrmA family.

It localises to the cytoplasm. It catalyses the reaction L-lysyl-[protein] + 3 S-adenosyl-L-methionine = N(6),N(6),N(6)-trimethyl-L-lysyl-[protein] + 3 S-adenosyl-L-homocysteine + 3 H(+). In terms of biological role, methylates ribosomal protein L11. In Streptococcus pyogenes serotype M4 (strain MGAS10750), this protein is Ribosomal protein L11 methyltransferase.